The following is a 323-amino-acid chain: Thiamine-monophosphate kinase (323 aa).

4 residues coordinate Mg(2+): aspartate 30, serine 45, threonine 46, and aspartate 47. Position 54 (histidine 54) interacts with substrate. 2 residues coordinate Mg(2+): aspartate 75 and aspartate 122. ATP-binding positions include 121-122 (GD) and arginine 146. Aspartate 212 contributes to the Mg(2+) binding site. Serine 214 is an ATP binding site. Position 215 (aspartate 215) interacts with Mg(2+). Substrate is bound by residues glutamate 263 and phenylalanine 319.

It belongs to the thiamine-monophosphate kinase family.

The catalysed reaction is thiamine phosphate + ATP = thiamine diphosphate + ADP. It participates in cofactor biosynthesis; thiamine diphosphate biosynthesis; thiamine diphosphate from thiamine phosphate: step 1/1. Its function is as follows. Catalyzes the ATP-dependent phosphorylation of thiamine-monophosphate (TMP) to form thiamine-pyrophosphate (TPP), the active form of vitamin B1. The sequence is that of Thiamine-monophosphate kinase from Buchnera aphidicola subsp. Acyrthosiphon pisum (strain APS) (Acyrthosiphon pisum symbiotic bacterium).